Reading from the N-terminus, the 300-residue chain is MLYLIGLGLSYKSDITVRGLEAIKKCSRVYLEHYTSILMAASQEELESYYGKEIILADRELVETGSKQILNNADKEDVAFLVVGDPFGATTHTDLVLRAKREAIPVEIIHNASVMNAVGACGLQLYNFGQTVSMVFFTDNWRPDSWYDKIWENRKIGLHTLVLLDIKVKEQSIENMARGRLIYEPPRYMSIAQCCEQLLEIEEKRGTKAYTPDTPAVAISRLGSSSQSFKSGTISELANYDSGEPLHSLVILGRQCHELELEYLLEFADDKEKFGKDVANDQEYFKPAAWVPPTEDDSDE.

Residues Leu-9, Asp-85, Gly-88, 113-114 (SV), and Leu-164 contribute to the S-adenosyl-L-methionine site. Position 172 is a phosphoserine (Ser-172). S-adenosyl-L-methionine is bound by residues Leu-222 and His-247. A Phosphoserine modification is found at Ser-298.

It belongs to the diphthine synthase family.

Its subcellular location is the cytoplasm. The catalysed reaction is 2-[(3S)-amino-3-carboxypropyl]-L-histidyl-[translation elongation factor 2] + 4 S-adenosyl-L-methionine = diphthine methyl ester-[translation elongation factor 2] + 4 S-adenosyl-L-homocysteine + 3 H(+). Its pathway is protein modification; peptidyl-diphthamide biosynthesis. Functionally, S-adenosyl-L-methionine-dependent methyltransferase that catalyzes four methylations of the modified target histidine residue in translation elongation factor 2 (EF-2), to form an intermediate called diphthine methyl ester. The four successive methylation reactions represent the second step of diphthamide biosynthesis. In Saccharomyces cerevisiae (strain ATCC 204508 / S288c) (Baker's yeast), this protein is Diphthine methyl ester synthase (DPH5).